Reading from the N-terminus, the 581-residue chain is Proline--tRNA ligase (581 aa).

The protein belongs to the class-II aminoacyl-tRNA synthetase family. ProS type 1 subfamily. In terms of assembly, homodimer.

The protein localises to the cytoplasm. The catalysed reaction is tRNA(Pro) + L-proline + ATP = L-prolyl-tRNA(Pro) + AMP + diphosphate. In terms of biological role, catalyzes the attachment of proline to tRNA(Pro) in a two-step reaction: proline is first activated by ATP to form Pro-AMP and then transferred to the acceptor end of tRNA(Pro). As ProRS can inadvertently accommodate and process non-cognate amino acids such as alanine and cysteine, to avoid such errors it has two additional distinct editing activities against alanine. One activity is designated as 'pretransfer' editing and involves the tRNA(Pro)-independent hydrolysis of activated Ala-AMP. The other activity is designated 'posttransfer' editing and involves deacylation of mischarged Ala-tRNA(Pro). The misacylated Cys-tRNA(Pro) is not edited by ProRS. This chain is Proline--tRNA ligase, found in Rhodococcus opacus (strain B4).